Consider the following 557-residue polypeptide: MSDGTASARSSSPLDRDPAFRVITVTKETGLGLKILGGINRNEGPLVYIHEVIPGGDCYKDGRLKPGDQLVSINKESMIGVSFEEAKSIITRAKLRSESPWEIAFIRQKSYCGHPGNICCPSPQVSEDCGPQTSTFTLLSSPSETLLPKTSSTPQTQDSTFPSCKAIQTKPEHDKTEHSPITSLDNSPADTSNADIAPAWTDDDSGPQGKISLNPSVRLKAEKLEMALNYLGIQPTKEQREALREQVQADSKGTVSFGDFVQVARSLFCLQLDEVNVGVHEIPSILDSQLLPCDSLEADEVGKLRQERNAALEERNVLKEKLLESEKHRKQLIEELQNVKQEAKAVAEETRALRSRIHLAEAAQRQAHGMEMDYEEVIRLLEAEVSELKAQLADYSDQNKESVQDLRKRVTVLDCQLRKSEMARKAFKASTERLLGFIEAIQEVLLDSSAPLSTLSERRAVLASQTSLPLLARNGRSFPATLLLESKELVRSVRAILDMDCLPYGWEEAYTADGIKYFINHVTQTTSWIHPVMSALNLSCAEESEEDCPRELTDPKS.

Phosphoserine is present on residues S10 and S12. A PDZ domain is found at 19-105 (AFRVITVTKE…RSESPWEIAF (87 aa)). S99 carries the phosphoserine; by PKB/AKT2 modification. Low complexity predominate over residues 142–154 (PSETLLPKTSSTP). Positions 142–214 (PSETLLPKTS…SGPQGKISLN (73 aa)) are disordered. Positions 179–194 (SPITSLDNSPADTSNA) are enriched in polar residues. S216 carries the post-translational modification Phosphoserine. Residues 298-408 (ADEVGKLRQE…NKESVQDLRK (111 aa)) are a coiled coil. S467 carries the phosphoserine modification. The 34-residue stretch at 500–533 (DCLPYGWEEAYTADGIKYFINHVTQTTSWIHPVM) folds into the WW domain.

In terms of assembly, interacts with STX4A. Phosphorylated on Ser-99 by PKB/AKT2 after insulin treatment. Phosphorylation on Ser-99 abolishes the interaction with STX4A. As to expression, detected in skeletal muscle, heart, testis, adipocytes and pancreatic islet cells.

It is found in the cytoplasm. Its function is as follows. Plays a role in the translocation of transport vesicles from the cytoplasm to the plasma membrane. Inhibits the translocation of SLC2A4 from intracellular vesicles to the plasma membrane by STX4A binding and preventing the interaction between STX4A and VAMP2. Stimulation with insulin disrupts the interaction with STX4A, leading to increased levels of SLC2A4 at the plasma membrane. May also play a role in the regulation of insulin release by pancreatic beta cells after stimulation by glucose. This is Syntaxin-binding protein 4 (Stxbp4) from Mus musculus (Mouse).